Here is a 261-residue protein sequence, read N- to C-terminus: tRNA pseudouridine synthase A (261 aa).

The active-site Nucleophile is Asp51. Tyr109 is a binding site for substrate.

The protein belongs to the tRNA pseudouridine synthase TruA family. As to quaternary structure, homodimer.

It catalyses the reaction uridine(38/39/40) in tRNA = pseudouridine(38/39/40) in tRNA. In terms of biological role, formation of pseudouridine at positions 38, 39 and 40 in the anticodon stem and loop of transfer RNAs. This chain is tRNA pseudouridine synthase A, found in Shewanella sp. (strain W3-18-1).